Consider the following 867-residue polypeptide: Coiled-coil domain-containing protein 178 (867 aa).

Coiled-coil stretches lie at residues 153–204 (DEKC…KIDS), 233–414 (WHLE…ENQY), 445–470 (ACTKLTEDNKKLEIDINKITVKTNES), and 662–696 (MIFYAKINELNEELKAKEEEKKSFDQTLEILKNKF).

The sequence is that of Coiled-coil domain-containing protein 178 (CCDC178) from Homo sapiens (Human).